We begin with the raw amino-acid sequence, 317 residues long: tRNA-dihydrouridine(16) synthase (317 aa).

FMN-binding positions include 7 to 9 (PME) and Gln-68. Residue Cys-98 is the Proton donor of the active site. FMN contacts are provided by residues Lys-139, 199 to 201 (NGE), and 223 to 224 (GR).

It belongs to the Dus family. DusC subfamily. The cofactor is FMN.

It catalyses the reaction 5,6-dihydrouridine(16) in tRNA + NADP(+) = uridine(16) in tRNA + NADPH + H(+). The enzyme catalyses 5,6-dihydrouridine(16) in tRNA + NAD(+) = uridine(16) in tRNA + NADH + H(+). Functionally, catalyzes the synthesis of 5,6-dihydrouridine (D), a modified base found in the D-loop of most tRNAs, via the reduction of the C5-C6 double bond in target uridines. Specifically modifies U16 in tRNAs. The polypeptide is tRNA-dihydrouridine(16) synthase (Pseudomonas syringae pv. tomato (strain ATCC BAA-871 / DC3000)).